A 213-amino-acid chain; its full sequence is Orotate phosphoribosyltransferase (213 aa).

Residue Lys26 coordinates 5-phospho-alpha-D-ribose 1-diphosphate. Residue 34–35 (FF) participates in orotate binding. 5-phospho-alpha-D-ribose 1-diphosphate is bound by residues 72–73 (YK), Arg99, Lys100, Lys103, His105, and 124–132 (DDVITAGTA). Orotate contacts are provided by Thr128 and Arg156.

The protein belongs to the purine/pyrimidine phosphoribosyltransferase family. PyrE subfamily. As to quaternary structure, homodimer. Mg(2+) serves as cofactor.

The catalysed reaction is orotidine 5'-phosphate + diphosphate = orotate + 5-phospho-alpha-D-ribose 1-diphosphate. Its pathway is pyrimidine metabolism; UMP biosynthesis via de novo pathway; UMP from orotate: step 1/2. Catalyzes the transfer of a ribosyl phosphate group from 5-phosphoribose 1-diphosphate to orotate, leading to the formation of orotidine monophosphate (OMP). This chain is Orotate phosphoribosyltransferase, found in Klebsiella pneumoniae subsp. pneumoniae (strain ATCC 700721 / MGH 78578).